We begin with the raw amino-acid sequence, 205 residues long: Molybdenum cofactor guanylyltransferase (205 aa).

Residues 14-16 (LAG), K27, D77, and D107 contribute to the GTP site. D107 contacts Mg(2+).

Belongs to the MobA family. In terms of assembly, monomer. The cofactor is Mg(2+).

The protein localises to the cytoplasm. It catalyses the reaction Mo-molybdopterin + GTP + H(+) = Mo-molybdopterin guanine dinucleotide + diphosphate. Functionally, transfers a GMP moiety from GTP to Mo-molybdopterin (Mo-MPT) cofactor (Moco or molybdenum cofactor) to form Mo-molybdopterin guanine dinucleotide (Mo-MGD) cofactor. This Burkholderia ambifaria (strain ATCC BAA-244 / DSM 16087 / CCUG 44356 / LMG 19182 / AMMD) (Burkholderia cepacia (strain AMMD)) protein is Molybdenum cofactor guanylyltransferase.